The following is a 49-amino-acid chain: Heme exporter protein C (49 aa).

Belongs to the CcmC/CycZ/HelC family.

It localises to the cell inner membrane. Required for the export of heme to the periplasm for the biogenesis of c-type cytochromes. This Rhizobium leguminosarum bv. viciae protein is Heme exporter protein C.